An 86-amino-acid polypeptide reads, in one-letter code: Small ribosomal subunit protein bS20 (86 aa).

The span at methionine 1–methionine 27 shows a compositional bias: basic residues. Residues methionine 1 to methionine 28 are disordered.

It belongs to the bacterial ribosomal protein bS20 family.

In terms of biological role, binds directly to 16S ribosomal RNA. The sequence is that of Small ribosomal subunit protein bS20 from Aliivibrio salmonicida (strain LFI1238) (Vibrio salmonicida (strain LFI1238)).